Consider the following 616-residue polypeptide: MPKLRSATTTQGRNMAGARALWRATGMKDGDFDKPIIAVVNSFTQFVPGHVHLKDLGQLVAREIEAAGGVAKEFNTIAVDDGIAMGHGGMLYSLPSRELIADSVEYMINAHCADAMVCISNCDKITPGMLMAAMRLNIPVIFVSGGPMEAGKTKLSDQIIKLDLVDAMIMAADPTVSDEDTAAVERSACPTCGSCSGMFTANSMNCLTEALGLSQPGNGSLLATHADREQLFKSAGHRIVELAKRYYEQDDVTALPRSIATRDAFENAIALDIAMGGSTNTVLHLLAIAQEGDVDFTMADIDRMSRRVPQLCKVAPSTQKYHMEDVHRAGGIVAILGELSRAGLLHTDVRNVLGLSLAELIEKYDVALNPSEEVKKFYSAGPGGIPTTKAFSQDCRWPSLDVDRKEGCIRTKENAYSQDGGLAVLAGNLAIDGCIVKTAGVDESILKFEGPAVVFESQDDAVAGILGGKVKAGDVVIVRYEGPKGGPGMQEMLYPTSYLKSMGLGKVCALITDGRFSGGSSGLSIGHVSPEAAAGGNIGLIADGDLISINIPSRTIDIKISDAELATRRAAMEAKGKAAWKPVNRERFVSFALRAYANLATSADKGAVRDRSKLGE.

Aspartate 81 provides a ligand contact to Mg(2+). Cysteine 122 is a binding site for [2Fe-2S] cluster. Mg(2+)-binding residues include aspartate 123 and lysine 124. An N6-carboxylysine modification is found at lysine 124. Cysteine 195 provides a ligand contact to [2Fe-2S] cluster. Residue glutamate 491 participates in Mg(2+) binding. The active-site Proton acceptor is the serine 517.

It belongs to the IlvD/Edd family. As to quaternary structure, homodimer. Requires [2Fe-2S] cluster as cofactor. Mg(2+) is required as a cofactor.

The enzyme catalyses (2R)-2,3-dihydroxy-3-methylbutanoate = 3-methyl-2-oxobutanoate + H2O. The catalysed reaction is (2R,3R)-2,3-dihydroxy-3-methylpentanoate = (S)-3-methyl-2-oxopentanoate + H2O. Its pathway is amino-acid biosynthesis; L-isoleucine biosynthesis; L-isoleucine from 2-oxobutanoate: step 3/4. It functions in the pathway amino-acid biosynthesis; L-valine biosynthesis; L-valine from pyruvate: step 3/4. Functions in the biosynthesis of branched-chain amino acids. Catalyzes the dehydration of (2R,3R)-2,3-dihydroxy-3-methylpentanoate (2,3-dihydroxy-3-methylvalerate) into 2-oxo-3-methylpentanoate (2-oxo-3-methylvalerate) and of (2R)-2,3-dihydroxy-3-methylbutanoate (2,3-dihydroxyisovalerate) into 2-oxo-3-methylbutanoate (2-oxoisovalerate), the penultimate precursor to L-isoleucine and L-valine, respectively. This Tolumonas auensis (strain DSM 9187 / NBRC 110442 / TA 4) protein is Dihydroxy-acid dehydratase.